Here is a 292-residue protein sequence, read N- to C-terminus: Ribosomal RNA small subunit methyltransferase A (292 aa).

S-adenosyl-L-methionine-binding residues include N28, L30, G55, E77, D103, and N123.

Belongs to the class I-like SAM-binding methyltransferase superfamily. rRNA adenine N(6)-methyltransferase family. RsmA subfamily.

The protein localises to the cytoplasm. It carries out the reaction adenosine(1518)/adenosine(1519) in 16S rRNA + 4 S-adenosyl-L-methionine = N(6)-dimethyladenosine(1518)/N(6)-dimethyladenosine(1519) in 16S rRNA + 4 S-adenosyl-L-homocysteine + 4 H(+). Functionally, specifically dimethylates two adjacent adenosines (A1518 and A1519) in the loop of a conserved hairpin near the 3'-end of 16S rRNA in the 30S particle. May play a critical role in biogenesis of 30S subunits. In Methylobacterium radiotolerans (strain ATCC 27329 / DSM 1819 / JCM 2831 / NBRC 15690 / NCIMB 10815 / 0-1), this protein is Ribosomal RNA small subunit methyltransferase A.